Here is a 104-residue protein sequence, read N- to C-terminus: MSSVFEIVNQARRKNKLKRELLDNEKKVRDNRKRVDLLDNLLDYIKPEMTHDEILGIIKNMKADYEDRVDDHIIKSAEISKARRDISRRIRELTEEDKQTQGKK.

Coiled-coil stretches lie at residues 7 to 34 (IVNQARRKNKLKRELLDNEKKVRDNRKR) and 76 to 96 (SAEISKARRDISRRIRELTEE).

Belongs to the pole-localizer TmaR family.

The protein resides in the cytoplasm. Pole-localizer protein involved in the regulation of several cellular processes. This chain is Pole-localizer protein TmaR, found in Vibrio atlanticus (strain LGP32) (Vibrio splendidus (strain Mel32)).